The following is a 274-amino-acid chain: Large ribosomal subunit protein uL2 (274 aa).

The interval 222 to 257 (GVAMNPVDHPHGGGEGRTSGGRHPVSPWGVPTKGYK) is disordered.

The protein belongs to the universal ribosomal protein uL2 family. As to quaternary structure, part of the 50S ribosomal subunit. Forms a bridge to the 30S subunit in the 70S ribosome.

One of the primary rRNA binding proteins. Required for association of the 30S and 50S subunits to form the 70S ribosome, for tRNA binding and peptide bond formation. It has been suggested to have peptidyltransferase activity; this is somewhat controversial. Makes several contacts with the 16S rRNA in the 70S ribosome. The protein is Large ribosomal subunit protein uL2 of Nitrosococcus oceani (strain ATCC 19707 / BCRC 17464 / JCM 30415 / NCIMB 11848 / C-107).